Reading from the N-terminus, the 151-residue chain is uncharacterized protein (151 aa).

The region spanning 3–151 (IKIDDLTGRQ…PNSVFMTKKL (149 aa)) is the N-acetyltransferase domain.

This sequence belongs to the acetyltransferase family.

This is an uncharacterized protein from Bacillus subtilis (strain 168).